Here is a 399-residue protein sequence, read N- to C-terminus: Chaperone protein DnaJ 1 (399 aa).

In terms of domain architecture, J spans 10-75 (DYYKVLGVPK…KKRKEYDEAR (66 aa)). A CR-type zinc finger spans residues 166-244 (GATVPLRMSS…CKGSGRAKSS (79 aa)). Residues C179, C182, C195, C198, C218, C221, C232, and C235 each contribute to the Zn(2+) site. CXXCXGXG motif repeat units follow at residues 179–186 (CKACSGTG), 195–202 (CPTCVGTG), 218–225 (CPDCKGRG), and 232–239 (CEVCKGSG).

It belongs to the DnaJ family. Homodimer. Zn(2+) is required as a cofactor.

It is found in the cytoplasm. Participates actively in the response to hyperosmotic and heat shock by preventing the aggregation of stress-denatured proteins and by disaggregating proteins, also in an autonomous, DnaK-independent fashion. Unfolded proteins bind initially to DnaJ; upon interaction with the DnaJ-bound protein, DnaK hydrolyzes its bound ATP, resulting in the formation of a stable complex. GrpE releases ADP from DnaK; ATP binding to DnaK triggers the release of the substrate protein, thus completing the reaction cycle. Several rounds of ATP-dependent interactions between DnaJ, DnaK and GrpE are required for fully efficient folding. Also involved, together with DnaK and GrpE, in the DNA replication of plasmids through activation of initiation proteins. This is Chaperone protein DnaJ 1 from Streptomyces coelicolor (strain ATCC BAA-471 / A3(2) / M145).